The sequence spans 109 residues: Iron-sulfur assembly protein IscA-like 3, mitochondrial (109 aa).

A mitochondrion-targeting transit peptide spans 1–18; the sequence is MRKQVLALSDTAAARIRQ. Residues cysteine 37, cysteine 100, and cysteine 102 each coordinate Fe cation.

The protein belongs to the HesB/IscA family. In terms of assembly, homodimer; may form tetramers and higher multimers. Fe cation serves as cofactor.

Its subcellular location is the mitochondrion. Involved in the assembly of mitochondrial iron-sulfur proteins. Probably involved in the binding of an intermediate of Fe/S cluster assembly. The chain is Iron-sulfur assembly protein IscA-like 3, mitochondrial from Arabidopsis thaliana (Mouse-ear cress).